Reading from the N-terminus, the 425-residue chain is uncharacterized protein (425 aa).

The CHY-type zinc finger occupies 135 to 202; the sequence is KEQEILGCSH…AAQYCKYCKN (68 aa). Zn(2+)-binding residues include Cys142, His144, Cys153, Cys156, Cys162, Cys165, His166, His172, Cys184, Cys187, Cys197, Cys200, Cys209, Cys212, His225, Cys226, Cys229, Cys232, His244, Cys245, Cys248, Cys251, His260, and Cys262. The CTCHY-type zinc-finger motif lies at 204 to 270; it reads MGRYYCNKCK…RCIERSTDCN (67 aa). An RING-type; atypical zinc finger spans residues 271 to 313; sequence CPICGEYMFNSRERVIFLSCSHPLHQRCHEEYIRTNYRCPTCY.

This is an uncharacterized protein from Schizosaccharomyces pombe (strain 972 / ATCC 24843) (Fission yeast).